The chain runs to 423 residues: 26S proteasome regulatory subunit 6B homolog (423 aa).

ATP is bound at residue 207–214; that stretch reads GPPGTGKT.

Belongs to the AAA ATPase family.

It localises to the cytoplasm. It is found in the nucleus. Functionally, the 26S proteasome is involved in the ATP-dependent degradation of ubiquitinated proteins. The regulatory (or ATPase) complex confers ATP dependency and substrate specificity to the 26S complex. In Aspergillus niger, this protein is 26S proteasome regulatory subunit 6B homolog (tbpA).